Reading from the N-terminus, the 129-residue chain is Cytochrome b5 (129 aa).

Residues 8–84 form the Cytochrome b5 heme-binding domain; the sequence is TTIYTHEEVA…LEKLYIGNLK (77 aa). His-43 and His-67 together coordinate heme. The chain crosses the membrane as a helical span at residues 104 to 124; the sequence is GINFPLIAVGVFLAAFGVYYY.

It belongs to the cytochrome b5 family.

Its subcellular location is the endoplasmic reticulum membrane. The protein localises to the microsome membrane. Functionally, membrane bound hemoprotein which function as an electron carrier for several membrane bound oxygenases. The sequence is that of Cytochrome b5 (Cytb5) from Candida tropicalis (Yeast).